A 148-amino-acid polypeptide reads, in one-letter code: Trypsin inhibitor CMe (148 aa).

The signal sequence occupies residues 1–24 (MAFKYQLLLSAAVMLAILVATATS).

It belongs to the protease inhibitor I6 (cereal trypsin/alpha-amylase inhibitor) family. In terms of processing, five disulfide bonds, which are essential for the inhibitor activity, are probably present. In terms of tissue distribution, expressed in the developing endosperm. Not detected in embryo, aleurone, coleoptile, roots and leaves.

The protein resides in the secreted. Inhibits trypsin in vitro. Probably plays a protective role through inhibition of insect midgut proteases. The protein is Trypsin inhibitor CMe (ITR1) of Hordeum vulgare (Barley).